The chain runs to 89 residues: Small ribosomal subunit protein uS14 (89 aa).

This sequence belongs to the universal ribosomal protein uS14 family. As to quaternary structure, part of the 30S ribosomal subunit. Contacts proteins S3 and S10.

In terms of biological role, binds 16S rRNA, required for the assembly of 30S particles and may also be responsible for determining the conformation of the 16S rRNA at the A site. The protein is Small ribosomal subunit protein uS14 of Exiguobacterium sibiricum (strain DSM 17290 / CCUG 55495 / CIP 109462 / JCM 13490 / 255-15).